A 51-amino-acid polypeptide reads, in one-letter code: Large ribosomal subunit protein eL39 (51 aa).

Belongs to the eukaryotic ribosomal protein eL39 family. As to quaternary structure, part of the 50S ribosomal subunit.

The sequence is that of Large ribosomal subunit protein eL39 from Thermococcus kodakarensis (strain ATCC BAA-918 / JCM 12380 / KOD1) (Pyrococcus kodakaraensis (strain KOD1)).